The following is a 215-amino-acid chain: Pyrrolidone-carboxylate peptidase (215 aa).

Residues Glu-80, Cys-143, and His-167 contribute to the active site.

Belongs to the peptidase C15 family. Homotetramer.

It is found in the cytoplasm. It catalyses the reaction Release of an N-terminal pyroglutamyl group from a polypeptide, the second amino acid generally not being Pro.. Its function is as follows. Removes 5-oxoproline from various penultimate amino acid residues except L-proline. This Pectobacterium atrosepticum (strain SCRI 1043 / ATCC BAA-672) (Erwinia carotovora subsp. atroseptica) protein is Pyrrolidone-carboxylate peptidase.